A 314-amino-acid chain; its full sequence is Olfactory receptor 1468 (314 aa).

The Extracellular segment spans residues 1–25; sequence MTEENQTVISQFLLLGLPIPSEHQH. N-linked (GlcNAc...) asparagine glycosylation is present at asparagine 5. A helical transmembrane segment spans residues 26–49; the sequence is VFYALFLSMYLTTVLGNLIIIILI. Residues 50-57 lie on the Cytoplasmic side of the membrane; that stretch reads HLDSHLHT. A helical membrane pass occupies residues 58-79; that stretch reads PMYLFLSNLSFSDLCFSSVTMP. Residues 80–100 lie on the Extracellular side of the membrane; the sequence is KLLQNMQSQVPSIPFAGCLTQ. Cysteine 97 and cysteine 189 are oxidised to a cystine. A helical transmembrane segment spans residues 101–120; it reads LYFYLYFADLESFLLVAMAY. Topologically, residues 121–139 are cytoplasmic; that stretch reads DRYVAICFPLHYMSIMSPK. Residues 140 to 158 form a helical membrane-spanning segment; sequence LCVSLVVLSWVLTTFHAML. Residues 159-196 are Extracellular-facing; the sequence is HTLLMARLSFCADNMIPHFFCDISPLLKLSCSDTHVNE. Residues 197–219 traverse the membrane as a helical segment; it reads LVIFVMGGLVIVIPFVLIIVSYA. The Cytoplasmic segment spans residues 220 to 236; that stretch reads RVVASILKVPSVRGIHK. Residues 237–260 traverse the membrane as a helical segment; that stretch reads IFSTCGSHLSVVSLFYGTIIGLYL. The Extracellular segment spans residues 261–272; the sequence is CPSANNSTVKET. The chain crosses the membrane as a helical span at residues 273–292; that stretch reads VMAMMYTVVTPMLNPFIYSL. The Cytoplasmic segment spans residues 293–314; that stretch reads RNRDMKEALIRVLCKKKITFCL.

This sequence belongs to the G-protein coupled receptor 1 family. Olfactory epithelium.

It localises to the cell membrane. Functionally, odorant receptor. The sequence is that of Olfactory receptor 1468 (Olr1468) from Rattus norvegicus (Rat).